Here is a 426-residue protein sequence, read N- to C-terminus: Serine hydroxymethyltransferase (426 aa).

Residues Leu113 and 117 to 119 (GHL) each bind (6S)-5,6,7,8-tetrahydrofolate. At Lys222 the chain carries N6-(pyridoxal phosphate)lysine. 363–365 (SPF) serves as a coordination point for (6S)-5,6,7,8-tetrahydrofolate.

This sequence belongs to the SHMT family. In terms of assembly, homodimer. The cofactor is pyridoxal 5'-phosphate.

The protein resides in the cytoplasm. It catalyses the reaction (6R)-5,10-methylene-5,6,7,8-tetrahydrofolate + glycine + H2O = (6S)-5,6,7,8-tetrahydrofolate + L-serine. It participates in one-carbon metabolism; tetrahydrofolate interconversion. It functions in the pathway amino-acid biosynthesis; glycine biosynthesis; glycine from L-serine: step 1/1. Catalyzes the reversible interconversion of serine and glycine with tetrahydrofolate (THF) serving as the one-carbon carrier. This reaction serves as the major source of one-carbon groups required for the biosynthesis of purines, thymidylate, methionine, and other important biomolecules. Also exhibits THF-independent aldolase activity toward beta-hydroxyamino acids, producing glycine and aldehydes, via a retro-aldol mechanism. The polypeptide is Serine hydroxymethyltransferase (Azobacteroides pseudotrichonymphae genomovar. CFP2).